The primary structure comprises 388 residues: Pepsin A (388 aa).

A signal peptide spans 1–15 (MKWLLLLGLVALSEC). Residues 16 to 62 (IIYKVPLVRKKSLRRNLSEHGLLKDFLKKHNRNPASKYFPQTEAPTL) constitute a propeptide, activation peptide. The Peptidase A1 domain occupies 76-385 (YFGTIGIGTP…DRANNQVGLA (310 aa)). D94 is a catalytic residue. A disulfide bond links C107 and C112. S130 carries the post-translational modification Phosphoserine. Residues C268 and C272 are joined by a disulfide bond. D277 is an active-site residue. A disulfide bridge links C311 with C344.

The protein belongs to the peptidase A1 family.

It is found in the secreted. The enzyme catalyses Preferential cleavage: hydrophobic, preferably aromatic, residues in P1 and P1' positions. Cleaves 1-Phe-|-Val-2, 4-Gln-|-His-5, 13-Glu-|-Ala-14, 14-Ala-|-Leu-15, 15-Leu-|-Tyr-16, 16-Tyr-|-Leu-17, 23-Gly-|-Phe-24, 24-Phe-|-Phe-25 and 25-Phe-|-Tyr-26 bonds in the B chain of insulin.. Its function is as follows. Shows particularly broad specificity; although bonds involving phenylalanine and leucine are preferred, many others are also cleaved to some extent. This Macaca mulatta (Rhesus macaque) protein is Pepsin A (PGA).